A 263-amino-acid polypeptide reads, in one-letter code: 1-(5-phosphoribosyl)-5-[(5-phosphoribosylamino)methylideneamino] imidazole-4-carboxamide isomerase (263 aa).

It belongs to the HisA/HisF family.

The protein localises to the cytoplasm. The catalysed reaction is 1-(5-phospho-beta-D-ribosyl)-5-[(5-phospho-beta-D-ribosylamino)methylideneamino]imidazole-4-carboxamide = 5-[(5-phospho-1-deoxy-D-ribulos-1-ylimino)methylamino]-1-(5-phospho-beta-D-ribosyl)imidazole-4-carboxamide. It participates in amino-acid biosynthesis; L-histidine biosynthesis; L-histidine from 5-phospho-alpha-D-ribose 1-diphosphate: step 4/9. The protein is 1-(5-phosphoribosyl)-5-[(5-phosphoribosylamino)methylideneamino] imidazole-4-carboxamide isomerase (HIS6) of Eremothecium gossypii (strain ATCC 10895 / CBS 109.51 / FGSC 9923 / NRRL Y-1056) (Yeast).